We begin with the raw amino-acid sequence, 259 residues long: Deoxyribose-phosphate aldolase (259 aa).

Asp102 (proton donor/acceptor) is an active-site residue. The active-site Schiff-base intermediate with acetaldehyde is Lys167. Lys201 serves as the catalytic Proton donor/acceptor.

Belongs to the DeoC/FbaB aldolase family. DeoC type 2 subfamily.

It is found in the cytoplasm. The catalysed reaction is 2-deoxy-D-ribose 5-phosphate = D-glyceraldehyde 3-phosphate + acetaldehyde. It functions in the pathway carbohydrate degradation; 2-deoxy-D-ribose 1-phosphate degradation; D-glyceraldehyde 3-phosphate and acetaldehyde from 2-deoxy-alpha-D-ribose 1-phosphate: step 2/2. Its function is as follows. Catalyzes a reversible aldol reaction between acetaldehyde and D-glyceraldehyde 3-phosphate to generate 2-deoxy-D-ribose 5-phosphate. The sequence is that of Deoxyribose-phosphate aldolase from Cronobacter sakazakii (strain ATCC BAA-894) (Enterobacter sakazakii).